A 603-amino-acid polypeptide reads, in one-letter code: Ribosome-inactivating protein PMRIPt (603 aa).

Residues methionine 1 to glutamine 39 form the signal peptide. Asparagine 74 and asparagine 168 each carry an N-linked (GlcNAc...) asparagine glycan. Glutamate 208 is an active-site residue. Cystine bridges form between cysteine 297–cysteine 335, cysteine 351–cysteine 370, and cysteine 392–cysteine 409. 2 consecutive Ricin B-type lectin domains span residues glycine 338–aspartate 466 and valine 467–methionine 593. One copy of the 1-alpha repeat lies at aspartate 348–serine 388. N-linked (GlcNAc...) asparagine glycans are attached at residues asparagine 356 and asparagine 408. One copy of the 1-beta repeat lies at methionine 389–asparagine 430. The 1-gamma repeat unit spans residues serine 433–aspartate 466. A 2-alpha repeat occupies lysine 478–valine 516. 2 disulfides stabilise this stretch: cysteine 481/cysteine 497 and cysteine 523/cysteine 540. N-linked (GlcNAc...) asparagine glycosylation is present at asparagine 488. Residues arginine 520–asparagine 558 form a 2-beta repeat. A 2-gamma repeat occupies alanine 561–threonine 597.

The protein belongs to the ribosome-inactivating protein family. Type 2 RIP subfamily. As to quaternary structure, tetramer of four pairs of disulfide bound A-B chains. Post-translationally, the precursor is processed in two chains, A and B, that are linked by a disulfide bond. In terms of processing, glycosylated. In terms of tissue distribution, expressed in rhizome and more abundantly in leaves (at protein level).

The catalysed reaction is Endohydrolysis of the N-glycosidic bond at one specific adenosine on the 28S rRNA.. Its activity is regulated as follows. Strongly inhibited by asialofetuin and asialomucin. Functionally, galNAc-specific agglutinin. Behaves as a type-2 ribosome-inactivating protein. Inhibits mammalian ribosomes. The A chain is responsible for inhibiting protein synthesis through the catalytic inactivation of 60S ribosomal subunits by removing adenine from position 4,324 of 28S rRNA. The B chain binds to cell receptors and probably facilitates the entry into the cell of the A chain; B chains are also responsible for cell agglutination (lectin activity). Involved in plant defense against insects. Has very low cytotoxic activity against the human tumor cell lines CEM and Molt4. This is Ribosome-inactivating protein PMRIPt from Polygonatum multiflorum (Solomon's seal).